The following is a 155-amino-acid chain: Zinc finger HIT domain-containing protein 3 (155 aa).

Zn(2+)-binding residues include Cys-11, Cys-14, Cys-22, Cys-25, Cys-30, Cys-34, His-38, and Cys-42. The HIT-type zinc finger occupies 11–42 (CVICLEKPKYRCPACRVPYCSVVCFRKHKEQC). Residue Ser-80 is modified to Phosphoserine.

Thyroid receptor interacting proteins (TRIPs) specifically interact with the ligand binding domain of the thyroid receptor (TR). Requires the presence of thyroid hormone for its interaction. Interacts with NUFIP1. Interacts (via HIT-type zinc finger) with the RUVBL1/RUVBL2 complex in the presence of ADP.

Its subcellular location is the cytoplasm. The protein resides in the nucleus. This is Zinc finger HIT domain-containing protein 3 (ZNHIT3) from Homo sapiens (Human).